Here is a 125-residue protein sequence, read N- to C-terminus: Prefoldin subunit beta (125 aa).

It belongs to the prefoldin subunit beta family. Heterohexamer of two alpha and four beta subunits.

The protein localises to the cytoplasm. In terms of biological role, molecular chaperone capable of stabilizing a range of proteins. Seems to fulfill an ATP-independent, HSP70-like function in archaeal de novo protein folding. This is Prefoldin subunit beta from Sulfolobus acidocaldarius (strain ATCC 33909 / DSM 639 / JCM 8929 / NBRC 15157 / NCIMB 11770).